A 369-amino-acid chain; its full sequence is Chorismate synthase (369 aa).

The NADP(+) site is built by R48 and R54. Residues 125 to 127 (RSS), 238 to 239 (NA), G283, 298 to 302 (KPTSS), and R324 contribute to the FMN site.

It belongs to the chorismate synthase family. In terms of assembly, homotetramer. It depends on FMNH2 as a cofactor.

It carries out the reaction 5-O-(1-carboxyvinyl)-3-phosphoshikimate = chorismate + phosphate. It participates in metabolic intermediate biosynthesis; chorismate biosynthesis; chorismate from D-erythrose 4-phosphate and phosphoenolpyruvate: step 7/7. In terms of biological role, catalyzes the anti-1,4-elimination of the C-3 phosphate and the C-6 proR hydrogen from 5-enolpyruvylshikimate-3-phosphate (EPSP) to yield chorismate, which is the branch point compound that serves as the starting substrate for the three terminal pathways of aromatic amino acid biosynthesis. This reaction introduces a second double bond into the aromatic ring system. The chain is Chorismate synthase from Acidiphilium cryptum (strain JF-5).